We begin with the raw amino-acid sequence, 149 residues long: Oligosaccharyltransferase complex subunit OSTC (149 aa).

The Cytoplasmic portion of the chain corresponds to 1-32; the sequence is METLYRVPFLVLECPNLKLKKPPWLHMPSAMT. The chain crosses the membrane as a helical span at residues 33–53; that stretch reads VYALVVVSYFLITGGIIYDVI. Topologically, residues 54–83 are extracellular; it reads VEPPSVGSMTDEHGHQRPVAFLAYRVNGQY. The helical transmembrane segment at 84–104 threads the bilayer; it reads IMEGLASSFLFTMGGLGFIIL. At 105–117 the chain is on the cytoplasmic side; it reads DRSNAPNIPKLNR. Residues 118–138 form a helical membrane-spanning segment; that stretch reads FLLLFIGFVCVLLSFFMARVF. The Extracellular segment spans residues 139 to 149; that stretch reads MRMKLPGYLMG.

This sequence belongs to the OSTC family. Component of STT3A-containing oligosaccharyl transferase (OST-A) complex. STT3A-containing complex assembly occurs through the formation of 3 subcomplexes. Subcomplex 1 contains RPN1 and TMEM258, subcomplex 2 contains the STT3A-specific subunits STT3A, DC2/OSTC, and KCP2 as well as the core subunit OST4, and subcomplex 3 contains RPN2, DAD1, and OST48. The OST-A complex can form stable complexes with the Sec61 complex or with both the Sec61 and TRAP complexes. Interacts with PSEN1 and NCSTN; indicative for an association with the gamma-secretase complex.

The protein localises to the endoplasmic reticulum. It is found in the membrane. It functions in the pathway protein modification; protein glycosylation. Its function is as follows. Subunit of STT3A-containing oligosaccharyl transferase (OST-A) complex that catalyzes the initial transfer of a defined glycan (Glc(3)Man(9)GlcNAc(2) in eukaryotes) from the lipid carrier dolichol-pyrophosphate to an asparagine residue within an Asn-X-Ser/Thr consensus motif in nascent polypeptide chains, the first step in protein N-glycosylation. N-glycosylation occurs cotranslationally and the complex associates with the Sec61 complex at the channel-forming translocon complex that mediates protein translocation across the endoplasmic reticulum (ER). Within the OST-A complex, acts as an adapter that anchors the OST-A complex to the Sec61 complex. May be involved in N-glycosylation of APP (amyloid-beta precursor protein). Can modulate gamma-secretase cleavage of APP by enhancing endoprotelysis of PSEN1. The protein is Oligosaccharyltransferase complex subunit OSTC of Homo sapiens (Human).